A 1514-amino-acid polypeptide reads, in one-letter code: Neurexin-1 (1514 aa).

The signal sequence occupies residues 1-30 (MGTALVQRGGCCLLCLSLLLLGCWAELGSG). The 187-residue stretch at 31–217 (LEFPGAEGQW…PPNSGGGSPC (187 aa)) folds into the Laminin G-like 1 domain. Over 31–1438 (LEFPGAEGQW…EVIRESSSTT (1408 aa)) the chain is Extracellular. N-linked (GlcNAc...) asparagine glycosylation is found at Asn125 and Asn190. The interval 197–221 (VDGGEVKLDDEPPNSGGGSPCEAGE) is disordered. One can recognise an EGF-like 1 domain in the interval 219–256 (AGEEGEGGVCLNGGVCSVVDDQAVCDCSRTGFRGKDCS). Disulfide bonds link Cys228-Cys243 and Cys245-Cys255. Laminin G-like domains follow at residues 283-480 (IATF…AFKC) and 487-679 (DPIT…KPSC). Ca(2+) contacts are provided by Asp329, Leu346, and Met414. 5 cysteine pairs are disulfide-bonded: Cys444–Cys480, Cys650–Cys679, Cys687–Cys698, Cys692–Cys707, and Cys709–Cys719. Residues 683–720 (TAKPCLSNPCKNNGMCRDGWNRYVCDCSGTGYLGRSCE) form the EGF-like 2 domain. Laminin G-like domains are found at residues 725–898 (VLSY…IDYC) and 912–1087 (DPVT…ERGC). Residues Asp772 and Leu789 each coordinate Ca(2+). N-linked (GlcNAc...) asparagine glycosylation occurs at Asn797. Residue Arg848 participates in Ca(2+) binding. 5 disulfide bridges follow: Cys890-Cys898, Cys1059-Cys1087, Cys1094-Cys1105, Cys1099-Cys1114, and Cys1116-Cys1126. One can recognise an EGF-like 3 domain in the interval 1090 to 1127 (PSTTCQEDSCSNQGVCLQQWDGFSCDCSMTSFSGPLCN). A Laminin G-like 6 domain is found at 1133–1331 (YIFSKGGGQI…DANIAIVGNV (199 aa)). Positions 1183 and 1200 each coordinate Ca(2+). N-linked (GlcNAc...) asparagine glycosylation is present at Asn1230. Ca(2+) contacts are provided by Ile1282 and Asn1284. Residue Ser1392 is glycosylated (O-linked (Xyl...) (heparan sulfate) serine). Residues 1396–1427 (PSDDEDIDPCEPSSGGLANPTRVGGREPYPGS) are disordered. Residues 1439 to 1459 (GMVVGIVAAAALCILILLYAM) traverse the membrane as a helical segment. Topologically, residues 1460–1514 (YKYRNRDEGSYHVDESRNYISNSAQSNGAVVKEKQPSSAKSANKNKKNKDKEYYV) are cytoplasmic. The segment at 1481 to 1507 (NSAQSNGAVVKEKQPSSAKSANKNKKN) is interaction with CASK. Residues 1481 to 1514 (NSAQSNGAVVKEKQPSSAKSANKNKKNKDKEYYV) form a disordered region.

This sequence belongs to the neurexin family. In terms of assembly, interacts (via laminin G-like domain 2 and/or laminin G-like domain 6) with NLGN1 forming a heterotetramer, where one NLGN1 dimer interacts with one NRXN1 dimer. Also interacts (via laminin G-like domain 2 and/or laminin G-like domain 6) with NLGN2, NLGN3 and NLGN4L; interactions with NLGN1, NLGN2, NLGN3 and NLGN4L are calcium-dependent. Interacts (via cytoplasmic C-terminal region) with CASK (via the PDZ, SH3 and guanylate kinase-like domains). Interacts (via cytoplasmic C-terminus) with CASKIN1 and APBA1. Interacts (via laminin G-like domain 2) with NXPH1 and NXPH3. Alpha-type isoforms (neurexin-1-alpha) interact (via laminin G-like domain 2 and/or laminin G-like domain 6) with DAG1 (via alpha-dystroglycan chain). Interacts with LRRTM1, LRRTM2, LRRTM3 and LRRTM4. Interacts with SYT13 and SYTL1. Interacts with CBLN1, CBLN2 and, less avidly, with CBLN4. Interacts with CLSTN3. Post-translationally, O-glycosylated; contains heparan sulfate. Heparan sulfate attachment is required for synapse development by mediating interactions with neuroligins and LRRTM2.

The protein resides in the presynaptic cell membrane. Cell surface protein involved in cell-cell-interactions, exocytosis of secretory granules and regulation of signal transmission. Function is isoform-specific. Alpha-type isoforms have a long N-terminus with six laminin G-like domains and play an important role in synaptic signal transmission. Alpha-type isoforms play a role in the regulation of calcium channel activity and Ca(2+)-triggered neurotransmitter release at synapses and at neuromuscular junctions. They play an important role in Ca(2+)-triggered exocytosis of secretory granules in pituitary gland. They may affect their functions at synapses and in endocrine cells via their interactions with proteins from the exocytotic machinery. Likewise, alpha-type isoforms play a role in regulating the activity of postsynaptic NMDA receptors, a subtype of glutamate-gated ion channels. Both alpha-type and beta-type isoforms may play a role in the formation or maintenance of synaptic junctions via their interactions (via the extracellular domains) with neuroligin family members, CBLN1 or CBLN2. In vitro, triggers the de novo formation of presynaptic structures. May be involved in specification of excitatory synapses. Alpha-type isoforms were first identified as receptors for alpha-latrotoxin from spider venom. In Mus musculus (Mouse), this protein is Neurexin-1 (Nrxn1).